A 158-amino-acid chain; its full sequence is Transmembrane protein 50B (158 aa).

Ala-2 carries the N-acetylalanine modification. Transmembrane regions (helical) follow at residues 28–48 (VVAG…AVVY), 56–76 (HAFH…NAVS), 98–118 (WLFI…WILF), and 128–148 (VYPG…TLIY).

Belongs to the UPF0220 family. May form homotrimers or homodimers.

It is found in the endoplasmic reticulum membrane. Its subcellular location is the golgi apparatus membrane. The chain is Transmembrane protein 50B (TMEM50B) from Bos taurus (Bovine).